A 159-amino-acid chain; its full sequence is Ribosomal RNA large subunit methyltransferase H (159 aa).

Residues L76, G108, and F127–F132 each bind S-adenosyl-L-methionine.

This sequence belongs to the RNA methyltransferase RlmH family. In terms of assembly, homodimer.

It is found in the cytoplasm. The catalysed reaction is pseudouridine(1915) in 23S rRNA + S-adenosyl-L-methionine = N(3)-methylpseudouridine(1915) in 23S rRNA + S-adenosyl-L-homocysteine + H(+). Functionally, specifically methylates the pseudouridine at position 1915 (m3Psi1915) in 23S rRNA. The protein is Ribosomal RNA large subunit methyltransferase H of Clostridium botulinum (strain ATCC 19397 / Type A).